Consider the following 685-residue polypeptide: Augmin complex subunit dgt5 (685 aa).

Coiled-coil stretches lie at residues 87 to 165 and 342 to 379; these read LQRY…NKIQ and NMRN…DLKL.

In terms of assembly, component of the augmin complex composed of dgt2, dgt3, dgt4, dgt5, dgt6, msd1, msd5 and wac. The complex interacts directly or indirectly with microtubules and is required for centrosome-independent generation of spindle microtubules.

The protein resides in the cytoplasm. It is found in the cytoskeleton. Its subcellular location is the spindle. The protein localises to the chromosome. It localises to the centromere. The protein resides in the kinetochore. It is found in the microtubule organizing center. Its subcellular location is the centrosome. As part of the augmin complex, plays a role in centrosome-independent generation of spindle microtubules. The complex is required for mitotic spindle assembly through its involvement in localizing gamma-tubulin to spindle microtubules. This Drosophila melanogaster (Fruit fly) protein is Augmin complex subunit dgt5.